The following is a 589-amino-acid chain: Carbonic anhydrase (589 aa).

Alpha-carbonic anhydrase domains are found at residues 59 to 316 (HDYN…YEYK) and 321 to 585 (DKYN…YGYN). Position 258-259 (258-259 (TT)) interacts with substrate. The segment at 390 to 589 (MQINFGDPPA…TVYGYNGAAA (200 aa)) is catalytic. Zn(2+)-binding residues include His420, His422, and His440.

This sequence belongs to the alpha-carbonic anhydrase family. Requires Zn(2+) as cofactor.

It catalyses the reaction hydrogencarbonate + H(+) = CO2 + H2O. In terms of biological role, reversible hydration of carbon dioxide. The protein is Carbonic anhydrase (DCA) of Dunaliella salina (Green alga).